The following is a 221-amino-acid chain: Proteasome subunit beta type-1 (221 aa).

The protein belongs to the peptidase T1B family. The 26S proteasome consists of a 20S proteasome core and two 19S regulatory subunits. The 20S proteasome core is composed of 28 subunits that are arranged in four stacked rings, resulting in a barrel-shaped structure. The two end rings are each formed by seven alpha subunits, and the two central rings are each formed by seven beta subunits. The catalytic chamber with the active sites is on the inside of the barrel.

It is found in the cytoplasm. Its subcellular location is the nucleus. Its function is as follows. Non-catalytic component of the proteasome, a multicatalytic proteinase complex which is characterized by its ability to cleave peptides with Arg, Phe, Tyr, Leu, and Glu adjacent to the leaving group at neutral or slightly basic pH. The proteasome has an ATP-dependent proteolytic activity. This Oryza sativa subsp. japonica (Rice) protein is Proteasome subunit beta type-1 (PBF1).